A 267-amino-acid polypeptide reads, in one-letter code: UPF0162 protein HI_1558 (267 aa).

Belongs to the UPF0162 family.

The polypeptide is UPF0162 protein HI_1558 (Haemophilus influenzae (strain ATCC 51907 / DSM 11121 / KW20 / Rd)).